A 242-amino-acid chain; its full sequence is Small ribosomal subunit protein uS2 (242 aa).

Belongs to the universal ribosomal protein uS2 family.

The sequence is that of Small ribosomal subunit protein uS2 from Pseudoalteromonas translucida (strain TAC 125).